The following is a 301-amino-acid chain: GTPase Era (301 aa).

Residues 7-175 (YCGFIAIVGR…AGIVRKHLPE (169 aa)) form the Era-type G domain. The segment at 15–22 (GRPNVGKS) is G1. Position 15-22 (15-22 (GRPNVGKS)) interacts with GTP. Residues 41 to 45 (QTTRH) are G2. A G3 region spans residues 62–65 (DTPG). Residues 62–66 (DTPGL) and 124–127 (NKVD) each bind GTP. A G4 region spans residues 124–127 (NKVD). The G5 stretch occupies residues 154–156 (ISA). The KH type-2 domain occupies 206–283 (LGAELPYSVT…HLELWVKVKS (78 aa)).

It belongs to the TRAFAC class TrmE-Era-EngA-EngB-Septin-like GTPase superfamily. Era GTPase family. As to quaternary structure, monomer.

The protein resides in the cytoplasm. It localises to the cell inner membrane. Its function is as follows. An essential GTPase that binds both GDP and GTP, with rapid nucleotide exchange. Plays a role in 16S rRNA processing and 30S ribosomal subunit biogenesis and possibly also in cell cycle regulation and energy metabolism. This is GTPase Era from Salmonella paratyphi B (strain ATCC BAA-1250 / SPB7).